The chain runs to 86 residues: Apolipoprotein C-I (86 aa).

The signal sequence occupies residues 1–26 (MRLFLSLPVLVVVLLMILEGPGPAQG).

Belongs to the apolipoprotein C1 family.

It localises to the secreted. Functionally, inhibitor of lipoprotein binding to the low density lipoprotein (LDL) receptor, LDL receptor-related protein, and very low density lipoprotein (VLDL) receptor. Associates with high density lipoproteins (HDL) and the triacylglycerol-rich lipoproteins in the plasma and makes up about 10% of the protein of the VLDL and 2% of that of HDL. Appears to interfere directly with fatty acid uptake and is also the major plasma inhibitor of cholesteryl ester transfer protein (CETP). Binds free fatty acids and reduces their intracellular esterification. Modulates the interaction of APOE with beta-migrating VLDL and inhibits binding of beta-VLDL to the LDL receptor-related protein. This chain is Apolipoprotein C-I (APOC1), found in Ateles geoffroyi (Black-handed spider monkey).